A 396-amino-acid chain; its full sequence is Elongation factor Tu (396 aa).

Residues 10 to 205 form the tr-type G domain; the sequence is KTHANIGTIG…AVDDYIPTPE (196 aa). A G1 region spans residues 19–26; it reads GHVDHGKT. Position 19–26 (19–26) interacts with GTP; sequence GHVDHGKT. Residue threonine 26 participates in Mg(2+) binding. Residues 61–65 are G2; it reads GITIS. A G3 region spans residues 82–85; the sequence is DCPG. Residues 82–86 and 137–140 each bind GTP; these read DCPGH and NKCD. Residues 137 to 140 are G4; the sequence is NKCD. Positions 175-177 are G5; that stretch reads SAL.

The protein belongs to the TRAFAC class translation factor GTPase superfamily. Classic translation factor GTPase family. EF-Tu/EF-1A subfamily. As to quaternary structure, monomer.

It localises to the cytoplasm. The enzyme catalyses GTP + H2O = GDP + phosphate + H(+). In terms of biological role, GTP hydrolase that promotes the GTP-dependent binding of aminoacyl-tRNA to the A-site of ribosomes during protein biosynthesis. This Halalkalibacterium halodurans (strain ATCC BAA-125 / DSM 18197 / FERM 7344 / JCM 9153 / C-125) (Bacillus halodurans) protein is Elongation factor Tu.